The sequence spans 351 residues: Protein MGF 360-12L (351 aa).

The stretch at 57 to 89 (DLNMALVKAVKENNYSLIKLFTEWGANINYGLI) is one ANK repeat.

Belongs to the asfivirus MGF 360 family.

Functionally, plays a role in virus cell tropism, and may be required for efficient virus replication in macrophages. This chain is Protein MGF 360-12L, found in Ornithodoros (relapsing fever ticks).